Here is a 178-residue protein sequence, read N- to C-terminus: Cytochrome b6-f complex iron-sulfur subunit (178 aa).

Residues 20 to 42 (LLTFGTATGVALGALYPVANYFM) form a helical membrane-spanning segment. Positions 65–161 (KTGWLATHQA…VDIEDDAVLV (97 aa)) constitute a Rieske domain. Residues Cys107, His109, Cys125, and His128 each coordinate [2Fe-2S] cluster. Cys112 and Cys127 form a disulfide bridge.

Belongs to the Rieske iron-sulfur protein family. The 4 large subunits of the cytochrome b6-f complex are cytochrome b6, subunit IV (17 kDa polypeptide, PetD), cytochrome f and the Rieske protein, while the 4 small subunits are PetG, PetL, PetM and PetN. The complex functions as a dimer. It depends on [2Fe-2S] cluster as a cofactor.

Its subcellular location is the cellular thylakoid membrane. It catalyses the reaction 2 oxidized [plastocyanin] + a plastoquinol + 2 H(+)(in) = 2 reduced [plastocyanin] + a plastoquinone + 4 H(+)(out). Its function is as follows. Component of the cytochrome b6-f complex, which mediates electron transfer between photosystem II (PSII) and photosystem I (PSI), cyclic electron flow around PSI, and state transitions. In Prochlorococcus marinus (strain MIT 9301), this protein is Cytochrome b6-f complex iron-sulfur subunit.